The sequence spans 156 residues: Small ribosomal subunit protein uS7 (156 aa).

The protein belongs to the universal ribosomal protein uS7 family. Part of the 30S ribosomal subunit. Contacts proteins S9 and S11.

Its function is as follows. One of the primary rRNA binding proteins, it binds directly to 16S rRNA where it nucleates assembly of the head domain of the 30S subunit. Is located at the subunit interface close to the decoding center, probably blocks exit of the E-site tRNA. The protein is Small ribosomal subunit protein uS7 of Syntrophus aciditrophicus (strain SB).